Consider the following 194-residue polypeptide: Segregation and condensation protein B (194 aa).

Belongs to the ScpB family. As to quaternary structure, homodimer. Homodimerization may be required to stabilize the binding of ScpA to the Smc head domains. Component of a cohesin-like complex composed of ScpA, ScpB and the Smc homodimer, in which ScpA and ScpB bind to the head domain of Smc. The presence of the three proteins is required for the association of the complex with DNA.

It localises to the cytoplasm. In terms of biological role, participates in chromosomal partition during cell division. May act via the formation of a condensin-like complex containing Smc and ScpA that pull DNA away from mid-cell into both cell halves. This is Segregation and condensation protein B from Brevibacillus brevis (strain 47 / JCM 6285 / NBRC 100599).